The following is a 243-amino-acid chain: Orotidine 5'-phosphate decarboxylase (243 aa).

Residues D18, K39, 66 to 75, T130, R192, Q201, G221, and R222 each bind substrate; that span reads DLKFHDIPAT. K68 (proton donor) is an active-site residue.

It belongs to the OMP decarboxylase family. Type 1 subfamily. As to quaternary structure, homodimer.

It carries out the reaction orotidine 5'-phosphate + H(+) = UMP + CO2. It participates in pyrimidine metabolism; UMP biosynthesis via de novo pathway; UMP from orotate: step 2/2. Catalyzes the decarboxylation of orotidine 5'-monophosphate (OMP) to uridine 5'-monophosphate (UMP). The protein is Orotidine 5'-phosphate decarboxylase of Synechococcus sp. (strain CC9902).